The primary structure comprises 120 residues: Large ribosomal subunit protein bL19 (120 aa).

Belongs to the bacterial ribosomal protein bL19 family.

This protein is located at the 30S-50S ribosomal subunit interface and may play a role in the structure and function of the aminoacyl-tRNA binding site. The protein is Large ribosomal subunit protein bL19 of Chlorobium chlorochromatii (strain CaD3).